Reading from the N-terminus, the 71-residue chain is uncharacterized protein (71 aa).

The N-terminal stretch at 1-26 (MIKFSVILGMIRCSLTHITTKNTVNA) is a signal peptide.

This is an uncharacterized protein from Bacillus subtilis (strain 168).